Consider the following 360-residue polypeptide: DNA replication and repair protein RecF (360 aa).

33 to 40 contributes to the ATP binding site; that stretch reads GENGSGKT.

This sequence belongs to the RecF family.

It is found in the cytoplasm. The RecF protein is involved in DNA metabolism; it is required for DNA replication and normal SOS inducibility. RecF binds preferentially to single-stranded, linear DNA. It also seems to bind ATP. This Rickettsia massiliae (strain Mtu5) protein is DNA replication and repair protein RecF.